We begin with the raw amino-acid sequence, 729 residues long: Beta-galactosidase 4 (729 aa).

The signal sequence occupies residues 1–35 (MAPAPTPAAAAGRRVAVLAAALVAASLAASVGVAN). The active-site Proton donor is the Glu-194. The active-site Nucleophile is the Glu-263.

It belongs to the glycosyl hydrolase 35 family.

It localises to the secreted. The protein resides in the extracellular space. The protein localises to the apoplast. The catalysed reaction is Hydrolysis of terminal non-reducing beta-D-galactose residues in beta-D-galactosides.. The chain is Beta-galactosidase 4 from Oryza sativa subsp. japonica (Rice).